Here is a 68-residue protein sequence, read N- to C-terminus: Large ribosomal subunit protein bL33c (68 aa).

This sequence belongs to the bacterial ribosomal protein bL33 family.

It is found in the plastid. Its subcellular location is the chloroplast. The polypeptide is Large ribosomal subunit protein bL33c (Amborella trichopoda).